The chain runs to 395 residues: S-adenosylmethionine synthase (395 aa).

Residue histidine 14 coordinates ATP. Aspartate 16 is a binding site for Mg(2+). A K(+)-binding site is contributed by glutamate 42. Residues glutamate 55 and glutamine 98 each coordinate L-methionine. The interval 98–108 (QSPDIALGVDK) is flexible loop. Residues 174–176 (DGK), 240–241 (RF), aspartate 249, 255–256 (RK), alanine 272, and lysine 276 each bind ATP. L-methionine is bound at residue aspartate 249. Lysine 280 is an L-methionine binding site.

This sequence belongs to the AdoMet synthase family. In terms of assembly, homotetramer; dimer of dimers. Mg(2+) is required as a cofactor. The cofactor is K(+).

It localises to the cytoplasm. The catalysed reaction is L-methionine + ATP + H2O = S-adenosyl-L-methionine + phosphate + diphosphate. The protein operates within amino-acid biosynthesis; S-adenosyl-L-methionine biosynthesis; S-adenosyl-L-methionine from L-methionine: step 1/1. In terms of biological role, catalyzes the formation of S-adenosylmethionine (AdoMet) from methionine and ATP. The overall synthetic reaction is composed of two sequential steps, AdoMet formation and the subsequent tripolyphosphate hydrolysis which occurs prior to release of AdoMet from the enzyme. This is S-adenosylmethionine synthase from Thermotoga maritima (strain ATCC 43589 / DSM 3109 / JCM 10099 / NBRC 100826 / MSB8).